Here is a 130-residue protein sequence, read N- to C-terminus: Con-Ins G2b (130 aa).

Residues 1–23 (MTTSSYFLLVALGLLLYVRQSFS) form the signal peptide. Disulfide bonds link Cys-29–Cys-100, Cys-41–Cys-103, Cys-53–Cys-116, and Cys-102–Cys-107. At Pro-34 the chain carries 4-hydroxyproline; partial. Positions 54 to 77 (EEEEARRGGTNDGGKKRRRASPLR) are disordered. The propeptide at 59–92 (RRGGTNDGGKKRRRASPLRKRRRFISMLKARAKR) is c peptide. Positions 68-77 (KKRRRASPLR) are enriched in basic residues. Glu-111 is modified (4-carboxyglutamate; partial).

This sequence belongs to the insulin family. In terms of assembly, heterodimer of A and B chains; disulfide-linked. In terms of tissue distribution, expressed by the venom gland.

It localises to the secreted. Its function is as follows. This venom insulin, from a fish-hunting cone snail, facilitates prey capture by rapidly inducing hypoglycemic shock. Intraperitoneal injection of this peptide into zebrafish lowers blood glucose with the same potency than human insulin. In vivo, when applied to water, this peptide reduces overall locomotor activity of zebrafish larvae, observed as a significant decrease in the percentage of time spent swimming and movement frequency. The protein is Con-Ins G2b of Conus geographus (Geography cone).